The primary structure comprises 895 residues: uncharacterized protein (895 aa).

The tract at residues 257-283 (KSHKYPPGPPDNSSSNTSGQQNTSNTS) is disordered. A compositionally biased stretch (low complexity) spans 268–283 (NSSSNTSGQQNTSNTS).

This is an uncharacterized protein from Acanthamoeba polyphaga mimivirus (APMV).